The primary structure comprises 205 residues: Phosphoribosyl-dephospho-CoA transferase (205 aa).

Residues Asp134 and Asp136 contribute to the active site.

This sequence belongs to the MdcG family.

The catalysed reaction is apo-[malonate decarboxylase ACP] + 2'-(5''-triphospho-alpha-D-ribosyl)-3'-dephospho-CoA = holo-[malonate decarboxylase ACP] + diphosphate. Functionally, transfers 2'-(5-triphosphoribosyl)-3'-dephosphocoenzyme-A to the apo-[acyl-carrier-protein] of the malonate decarboxylase to yield holo-[acyl-carrier-protein]. This Klebsiella pneumoniae protein is Phosphoribosyl-dephospho-CoA transferase (mdcG).